The primary structure comprises 262 residues: Acyl-[acyl-carrier-protein]--UDP-N-acetylglucosamine O-acyltransferase (262 aa).

Belongs to the transferase hexapeptide repeat family. LpxA subfamily. Homotrimer.

The protein resides in the cytoplasm. It carries out the reaction a (3R)-hydroxyacyl-[ACP] + UDP-N-acetyl-alpha-D-glucosamine = a UDP-3-O-[(3R)-3-hydroxyacyl]-N-acetyl-alpha-D-glucosamine + holo-[ACP]. The protein operates within glycolipid biosynthesis; lipid IV(A) biosynthesis; lipid IV(A) from (3R)-3-hydroxytetradecanoyl-[acyl-carrier-protein] and UDP-N-acetyl-alpha-D-glucosamine: step 1/6. In terms of biological role, involved in the biosynthesis of lipid A, a phosphorylated glycolipid that anchors the lipopolysaccharide to the outer membrane of the cell. The protein is Acyl-[acyl-carrier-protein]--UDP-N-acetylglucosamine O-acyltransferase of Yersinia enterocolitica.